The sequence spans 404 residues: G-protein coupled receptor 182 (404 aa).

Over 1–57 the chain is Extracellular; it reads MSVKPSWGPGPSEGVTAVPTSDLGEIHNWTELLDLFNHTLSECHVELSQSTKRVVLF. 2 N-linked (GlcNAc...) asparagine glycosylation sites follow: N28 and N37. The chain crosses the membrane as a helical span at residues 58 to 79; it reads ALYLAMFVVGLVENLLVICVNW. The Cytoplasmic segment spans residues 80–90; it reads RGSGRAGLMNL. The chain crosses the membrane as a helical span at residues 91 to 113; it reads YILNMAIADLGIVLSLPVWMLEV. Residues 114–127 lie on the Extracellular side of the membrane; the sequence is TLDYTWLWGSFSCR. C126 and C202 are disulfide-bonded. The chain crosses the membrane as a helical span at residues 128 to 149; the sequence is FTHYFYFVNMYSSIFFLVCLSV. Residues 150 to 170 lie on the Cytoplasmic side of the membrane; sequence DRYVTLTSASPSWQRYQHRVR. A helical membrane pass occupies residues 171-193; that stretch reads RAMCAGIWVLSAIIPLPEVVHIQ. Topologically, residues 194-217 are extracellular; the sequence is LVEGPEPMCLFMAPFETYSTWALA. Residues 218-239 form a helical membrane-spanning segment; that stretch reads VALSTTILGFLLPFPLITVFNV. Residues 240 to 258 are Cytoplasmic-facing; it reads LTACRLRQPGQPKSRRHCL. Residues 259–280 form a helical membrane-spanning segment; the sequence is LLCAYVAVFVMCWLPYHVTLLL. Topologically, residues 281-299 are extracellular; sequence LTLHGTHISLHCHLVHLLY. Residues 300–320 traverse the membrane as a helical segment; sequence FFYDVIDCFSMLHCVINPILY. At 321–404 the chain is on the cytoplasmic side; it reads NFLSPHFRGR…ISPTQPLTPS (84 aa).

This sequence belongs to the G-protein coupled receptor 1 family. In terms of tissue distribution, highly expressed in heart, skeletal muscle, immune system, adrenal gland and liver.

The protein resides in the cell membrane. In terms of biological role, orphan receptor. The chain is G-protein coupled receptor 182 (GPR182) from Homo sapiens (Human).